Reading from the N-terminus, the 176-residue chain is Ferritin, middle subunit (176 aa).

The 150-residue stretch at 7–156 (QNYHSDCEAA…DFITNLKRLG (150 aa)) folds into the Ferritin-like diiron domain. Fe cation-binding residues include Glu24, Glu59, His62, Glu104, Gln138, and Asp141.

It belongs to the ferritin family. Oligomer of 24 subunits. The functional molecule is roughly spherical and contains a central cavity into which the polymeric mineral iron core is deposited.

It carries out the reaction 4 Fe(2+) + O2 + 4 H(+) = 4 Fe(3+) + 2 H2O. In terms of biological role, stores iron in a soluble, non-toxic, readily available form. Important for iron homeostasis. Has ferroxidase activity. Iron is taken up in the ferrous form and deposited as ferric hydroxides after oxidation. This Aquarana catesbeiana (American bullfrog) protein is Ferritin, middle subunit.